The chain runs to 285 residues: tRNA (cytidine(32)/guanosine(34)-2'-O)-methyltransferase (285 aa).

Positions 53, 55, 83, 99, and 124 each coordinate S-adenosyl-L-methionine. Lys164 serves as the catalytic Proton acceptor.

This sequence belongs to the class I-like SAM-binding methyltransferase superfamily. RNA methyltransferase RlmE family. TRM7 subfamily.

The protein resides in the cytoplasm. The enzyme catalyses cytidine(32)/guanosine(34) in tRNA + 2 S-adenosyl-L-methionine = 2'-O-methylcytidine(32)/2'-O-methylguanosine(34) in tRNA + 2 S-adenosyl-L-homocysteine + 2 H(+). Methylates the 2'-O-ribose of nucleotides at positions 32 and 34 of the tRNA anticodon loop of substrate tRNAs. Requires trm732 for methylation of the cytidine at position 32 of the anticodon loop of substrate tRNAs. Requires trm734 for methylation of the nucleotide at position 34 of the anticodon loop of substrate tRNAs. Methylates tRNA(Phe). In Schizosaccharomyces pombe (strain 972 / ATCC 24843) (Fission yeast), this protein is tRNA (cytidine(32)/guanosine(34)-2'-O)-methyltransferase.